The following is a 164-amino-acid chain: Putative 4-hydroxy-4-methyl-2-oxoglutarate aldolase (164 aa).

Substrate contacts are provided by residues 74 to 77 (GGNL) and Arg96. A divalent metal cation is bound at residue Asp97.

It belongs to the class II aldolase/RraA-like family. In terms of assembly, homotrimer. A divalent metal cation serves as cofactor.

The catalysed reaction is 4-hydroxy-4-methyl-2-oxoglutarate = 2 pyruvate. The enzyme catalyses oxaloacetate + H(+) = pyruvate + CO2. Catalyzes the aldol cleavage of 4-hydroxy-4-methyl-2-oxoglutarate (HMG) into 2 molecules of pyruvate. Also contains a secondary oxaloacetate (OAA) decarboxylase activity due to the common pyruvate enolate transition state formed following C-C bond cleavage in the retro-aldol and decarboxylation reactions. The sequence is that of Putative 4-hydroxy-4-methyl-2-oxoglutarate aldolase from Thermus thermophilus (strain ATCC BAA-163 / DSM 7039 / HB27).